The following is an 843-amino-acid chain: Protein P (843 aa).

Positions 1 to 177 (MPLSYQHFRK…FCGSPYSWEQ (177 aa)) are terminal protein domain (TP). The interval 178-346 (DLQHGRLVFQ…YCLCHIVNLI (169 aa)) is spacer. Disordered stretches follow at residues 220–258 (KSRL…VGVE) and 292–319 (SKGH…SQGS). A compositionally biased stretch (low complexity) spans 308–319 (PPNSSRSQSQGS). The tract at residues 347–690 (DDWGPCAEHG…YLNLYPVARQ (344 aa)) is polymerase/reverse transcriptase domain (RT). A Reverse transcriptase domain is found at 357 to 600 (EHRIRTPRTP…YSLNFMGYVI (244 aa)). Mg(2+) contacts are provided by D429, D551, and D552.

The protein belongs to the hepadnaviridae P protein family.

It catalyses the reaction DNA(n) + a 2'-deoxyribonucleoside 5'-triphosphate = DNA(n+1) + diphosphate. The enzyme catalyses Endonucleolytic cleavage to 5'-phosphomonoester.. Activated by host HSP70 and HSP40 in vitro to be able to bind the epsilon loop of the pgRNA. Because deletion of the RNase H region renders the protein partly chaperone-independent, the chaperones may be needed indirectly to relieve occlusion of the RNA-binding site by this domain. Inhibited by several reverse-transcriptase inhibitors: Lamivudine, Adefovir and Entecavir. Multifunctional enzyme that converts the viral RNA genome into dsDNA in viral cytoplasmic capsids. This enzyme displays a DNA polymerase activity that can copy either DNA or RNA templates, and a ribonuclease H (RNase H) activity that cleaves the RNA strand of RNA-DNA heteroduplexes in a partially processive 3'- to 5'-endonucleasic mode. Neo-synthesized pregenomic RNA (pgRNA) are encapsidated together with the P protein, and reverse-transcribed inside the nucleocapsid. Initiation of reverse-transcription occurs first by binding the epsilon loop on the pgRNA genome, and is initiated by protein priming, thereby the 5'-end of (-)DNA is covalently linked to P protein. Partial (+)DNA is synthesized from the (-)DNA template and generates the relaxed circular DNA (RC-DNA) genome. After budding and infection, the RC-DNA migrates in the nucleus, and is converted into a plasmid-like covalently closed circular DNA (cccDNA). The activity of P protein does not seem to be necessary for cccDNA generation, and is presumably released from (+)DNA by host nuclear DNA repair machinery. The polypeptide is Protein P (Hepatitis B virus genotype B1 (isolate Japan/Yamagata-2/1998) (HBV-B)).